The primary structure comprises 76 residues: DNA-directed RNA polymerase subunit epsilon (76 aa).

This sequence belongs to the RNA polymerase subunit epsilon family. In terms of assembly, RNAP is composed of a core of 2 alpha, a beta and a beta' subunit. The core is associated with a delta subunit, and at least one of epsilon or omega. When a sigma factor is associated with the core the holoenzyme is formed, which can initiate transcription.

The enzyme catalyses RNA(n) + a ribonucleoside 5'-triphosphate = RNA(n+1) + diphosphate. Its function is as follows. A non-essential component of RNA polymerase (RNAP). This is DNA-directed RNA polymerase subunit epsilon from Streptococcus gordonii (strain Challis / ATCC 35105 / BCRC 15272 / CH1 / DL1 / V288).